The following is a 413-amino-acid chain: Alpha-1-antitrypsin 1-2 (413 aa).

A signal peptide spans 1-24 (MTPSISWGLLLLAGLCCMVPSFLA). N-linked (GlcNAc...) asparagine glycans are attached at residues Asn-64, Asn-101, and Asn-265. Positions 368 to 387 (AATVFEAVPMSMPPILRFDH) are RCL.

The protein belongs to the serpin family.

Its subcellular location is the secreted. Inhibitor of serine proteases. Its primary target is elastase, but it also has a moderate affinity for plasmin and thrombin. The sequence is that of Alpha-1-antitrypsin 1-2 (Serpina1b) from Mus musculus (Mouse).